A 22-amino-acid polypeptide reads, in one-letter code: NADH dehydrogenase [ubiquinone] 1 alpha subcomplex subunit 9 (22 aa).

Residues 1 to 22 (ASNLATGGAGPLIXKGTGGRSS) form a disordered region.

It belongs to the complex I NDUFA9 subunit family. In terms of assembly, complex I is composed of about 45 different subunits. FAD is required as a cofactor.

It localises to the mitochondrion matrix. Its function is as follows. Accessory subunit of the mitochondrial membrane respiratory chain NADH dehydrogenase (Complex I), that is believed not to be involved in catalysis. Complex I functions in the transfer of electrons from NADH to the respiratory chain. The immediate electron acceptor for the enzyme is believed to be ubiquinone. The polypeptide is NADH dehydrogenase [ubiquinone] 1 alpha subcomplex subunit 9 (Solanum tuberosum (Potato)).